The primary structure comprises 102 residues: Spexin prohormone 1 (102 aa).

The N-terminal stretch at 1–26 (MKDLRTLAAYALALLLLATFVSYSRS) is a signal peptide. A propeptide spanning residues 27–35 (APMGSFQRR) is cleaved from the precursor. Gln49 bears the Glutamine amide mark. The propeptide occupies 50–102 (GRRFVSEDRNEGDLYDTIRLESQSQNTENLSISKAAAFLLNVLQQARDEGEPY).

This sequence belongs to the spexin family. Expressed in the anterior hypothalamus, ventromedial thalamic nucleus and medial longitudinal fasciculus of the brain (at protein level). Widely expressed. Expressed predominantly in the spleen, kidney, liver and testis. Expressed in olfactory bulb, pituitary, telencephalon, diencephalons, spinal cord, optic tectum, cerebellum and hypothalamus of the brain.

The protein resides in the secreted. It is found in the extracellular space. It localises to the cytoplasmic vesicle. The protein localises to the secretory vesicle. Its function is as follows. Plays a role in the regulation of food intake and body weight and in reproduction. May also play a role as a central modulator of cardiovascular and renal function and nociception. Functionally, brain administration of the peptide inhibits food consumption. May function as a satiety factor for feeding control. Involved in the negative regulation of the reproductive axis by inhibiting luteinizing hormone secretion from pituitary cells. This Carassius auratus (Goldfish) protein is Spexin prohormone 1 (spx).